The following is a 436-amino-acid chain: AMSH-like protease (436 aa).

N-acetylmethionine is present on methionine 1. 2 positions are modified to phosphoserine: serine 25 and serine 242. Residues 269 to 397 enclose the MPN domain; it reads VVLSRDLCHK…IFRLTNAGML (129 aa). Residues histidine 347, histidine 349, aspartate 360, histidine 362, cysteine 402, histidine 408, and histidine 410 each coordinate Zn(2+). Positions 347–360 match the JAMM motif motif; sequence HTHPTQTAFLSSVD.

The protein belongs to the peptidase M67C family. It depends on Zn(2+) as a cofactor. As to expression, ubiquitously expressed. Isoform 1 is widely expressed while isoform 2 is testis-specific.

In terms of biological role, zinc metalloprotease that specifically cleaves 'Lys-63'-linked polyubiquitin chains. Acts as a positive regulator of the TORC1 signaling pathway by mediating 'Lys-63'-linked deubiquitination of SESN2, thereby inhibiting SESN2-interaction with the GATOR2 complex. Does not cleave 'Lys-48'-linked polyubiquitin chains. This is AMSH-like protease (Stambpl1) from Mus musculus (Mouse).